The following is a 286-amino-acid chain: F-box/SPRY domain-containing protein 1 (286 aa).

Ala2 is modified (N-acetylalanine). The 50-residue stretch at Ala33–Leu82 folds into the F-box domain. The B30.2/SPRY domain maps to Leu92–Leu284.

The protein belongs to the FBXO45/Fsn family. In terms of assembly, forms a complex with MYCBP2 and SKP1. Interacts with HEY1; leading to FBXO45 nuclear translocation. Interacts (via SPRY domain) with CDH2.

It is found in the secreted. It localises to the postsynaptic cell membrane. The protein resides in the presynaptic cell membrane. The protein localises to the nucleus. It participates in protein modification; protein ubiquitination. In terms of biological role, component of E3 ubiquitin ligase complex consisting of FBXO45, MYCBP2 and SKP1. Functions in substrate recognition but also plays an important role in assembly of the complex. Required for normal neuromuscular synaptogenesis, axon pathfinding and neuronal migration. Regulates neuron migration during brain development through interaction with N-cadherin/CDH2 after secretion via a non-classical mechanism. Plays a role in the regulation of neurotransmission at mature neurons. May control synaptic activity by controlling UNC13A via ubiquitin dependent pathway. Specifically recognizes TP73, promoting its ubiquitination and degradation. Polyubiquitinates NMNAT2, an adenylyltransferase that acts as an axon maintenance factor, and regulates its stability and degradation by the proteasome. Also acts by ubiquitinating FBXW7 during prolonged mitotic arrest and promotes FBXW7 proteasomal degradation. Induces subsequently an increase in mitotic slippage and prevents mitotic cell death. In response to influenza infection, mediates interferon-lambda receptor IFNLR1 polyubiquitination and degradation through the ubiquitin-proteasome system by docking with its intracellular receptor domain. The protein is F-box/SPRY domain-containing protein 1 (FBXO45) of Homo sapiens (Human).